The chain runs to 454 residues: Bifunctional protein GlmU (454 aa).

The interval 1–226 is pyrophosphorylase; sequence MALNVVILAA…AIEVEGANNR (226 aa). Residues 8–11, Lys22, Gln73, 78–79, 100–102, Gly137, Glu151, Asn166, and Asn224 each bind UDP-N-acetyl-alpha-D-glucosamine; these read LAAG, GT, and YGD. Asp102 serves as a coordination point for Mg(2+). Mg(2+) is bound at residue Asn224. Residues 227–247 form a linker region; that stretch reads VQLAQLERAYQARAAEKLMLE. The interval 248 to 454 is N-acetyltransferase; sequence GANLRDPARI…GWPRPVKLKK (207 aa). Arg330 and Lys348 together coordinate UDP-N-acetyl-alpha-D-glucosamine. The active-site Proton acceptor is His360. 2 residues coordinate UDP-N-acetyl-alpha-D-glucosamine: Tyr363 and Asn374. Residues Ala377, 383-384, Ser402, Ala420, and Arg437 each bind acetyl-CoA; that span reads NY.

In the N-terminal section; belongs to the N-acetylglucosamine-1-phosphate uridyltransferase family. The protein in the C-terminal section; belongs to the transferase hexapeptide repeat family. As to quaternary structure, homotrimer. The cofactor is Mg(2+).

The protein resides in the cytoplasm. The catalysed reaction is alpha-D-glucosamine 1-phosphate + acetyl-CoA = N-acetyl-alpha-D-glucosamine 1-phosphate + CoA + H(+). The enzyme catalyses N-acetyl-alpha-D-glucosamine 1-phosphate + UTP + H(+) = UDP-N-acetyl-alpha-D-glucosamine + diphosphate. Its pathway is nucleotide-sugar biosynthesis; UDP-N-acetyl-alpha-D-glucosamine biosynthesis; N-acetyl-alpha-D-glucosamine 1-phosphate from alpha-D-glucosamine 6-phosphate (route II): step 2/2. It functions in the pathway nucleotide-sugar biosynthesis; UDP-N-acetyl-alpha-D-glucosamine biosynthesis; UDP-N-acetyl-alpha-D-glucosamine from N-acetyl-alpha-D-glucosamine 1-phosphate: step 1/1. The protein operates within bacterial outer membrane biogenesis; LPS lipid A biosynthesis. In terms of biological role, catalyzes the last two sequential reactions in the de novo biosynthetic pathway for UDP-N-acetylglucosamine (UDP-GlcNAc). The C-terminal domain catalyzes the transfer of acetyl group from acetyl coenzyme A to glucosamine-1-phosphate (GlcN-1-P) to produce N-acetylglucosamine-1-phosphate (GlcNAc-1-P), which is converted into UDP-GlcNAc by the transfer of uridine 5-monophosphate (from uridine 5-triphosphate), a reaction catalyzed by the N-terminal domain. This is Bifunctional protein GlmU from Shewanella woodyi (strain ATCC 51908 / MS32).